A 354-amino-acid chain; its full sequence is Chorismate synthase (354 aa).

Arginine 48 contacts NADP(+). FMN is bound by residues 125-127, glycine 277, 292-296, and arginine 318; these read RAS and KPIPS.

It belongs to the chorismate synthase family. Homotetramer. Requires FMNH2 as cofactor.

The enzyme catalyses 5-O-(1-carboxyvinyl)-3-phosphoshikimate = chorismate + phosphate. Its pathway is metabolic intermediate biosynthesis; chorismate biosynthesis; chorismate from D-erythrose 4-phosphate and phosphoenolpyruvate: step 7/7. Catalyzes the anti-1,4-elimination of the C-3 phosphate and the C-6 proR hydrogen from 5-enolpyruvylshikimate-3-phosphate (EPSP) to yield chorismate, which is the branch point compound that serves as the starting substrate for the three terminal pathways of aromatic amino acid biosynthesis. This reaction introduces a second double bond into the aromatic ring system. The polypeptide is Chorismate synthase (Nitratidesulfovibrio vulgaris (strain DP4) (Desulfovibrio vulgaris)).